Reading from the N-terminus, the 247-residue chain is MLLLPLPLLLLFLCSRAEAGEIIGGTECKPHSRPYMAYLEIVTSNGPSKSCGGFLIRRNFVLTAAHCAGRSITVTLGAHNITEKEDTWQELEVIKQFRHPKYNTSTLHHDIMLLKLKEKASLTLAVGTLPFPSQFNFVPPGRMCRVAGWGRTGVLKPGSDTLQEVKLRLMDPQACSHFRYFDHNLQLCVGNPRKTKSAFKGDSGGPLLCAGVAQGIVSYGRLDAKPPAVFTRISHYRPWINKILQAN.

The signal sequence occupies residues 1-19 (MLLLPLPLLLLFLCSRAEA). Residues 20–21 (GE) constitute a propeptide, activation peptide. The Peptidase S1 domain occupies 22–245 (IIGGTECKPH…YRPWINKILQ (224 aa)). A disulfide bridge connects residues cysteine 51 and cysteine 67. The Charge relay system role is filled by histidine 66. N-linked (GlcNAc...) asparagine glycans are attached at residues asparagine 80 and asparagine 103. Aspartate 110 (charge relay system) is an active-site residue. 2 cysteine pairs are disulfide-bonded: cysteine 144–cysteine 209 and cysteine 175–cysteine 188. The active-site Charge relay system is serine 203.

This sequence belongs to the peptidase S1 family. Granzyme subfamily.

The protein localises to the secreted. Its subcellular location is the cytoplasmic granule. It carries out the reaction Preferential cleavage: Phe-|-Xaa &gt; Tyr-|-Xaa &gt; Trp-|-Xaa &gt; Leu-|-Xaa.. Its function is as follows. Major secreted protease of mast cells with suspected roles in vasoactive peptide generation, extracellular matrix degradation, and regulation of gland secretion. In Papio hamadryas (Hamadryas baboon), this protein is Chymase (CMA1).